The following is a 385-amino-acid chain: GDP-D-glucose phosphorylase 1 (385 aa).

Catalysis depends on H218, which acts as the Tele-GMP-histidine intermediate.

It belongs to the GDPGP1 family.

Its subcellular location is the cytoplasm. The enzyme catalyses GDP-alpha-D-glucose + phosphate = alpha-D-glucose 1-phosphate + GDP + H(+). In terms of biological role, specific and highly efficient GDP-D-glucose phosphorylase regulating the levels of GDP-D-glucose in cells. The sequence is that of GDP-D-glucose phosphorylase 1 (GDPGP1) from Bos taurus (Bovine).